We begin with the raw amino-acid sequence, 163 residues long: ADP-ribosylation factor-like protein 2-binding protein (163 aa).

Belongs to the ARL2BP family. Interacts with GTP bound ARL2 and ARL3; the complex ARL2-ARL2BP as well as ARL2BP alone, binds to SLC25A4/ANT1. Interaction with ARL2 may be required for targeting to cilia basal body. Interacts with STAT3; interaction is enhanced with ARL2. Found in a complex with ARL2BP, ARL2 and SLC25A6. Found in a complex with ARL2, ARL2BP and SLC25A4. Interacts with STAT2, STAT3 and STAT4. Widely expressed, with most abundant activity in brain, especially in hippocampus and cortex. Also expressed in lung, cerebellum, liver, kidney, retina, spleen, muscle and heart (at protein level).

It is found in the cytoplasm. The protein resides in the mitochondrion intermembrane space. Its subcellular location is the cytoskeleton. The protein localises to the microtubule organizing center. It localises to the centrosome. It is found in the nucleus. The protein resides in the cilium basal body. Its function is as follows. Together with ARL2, plays a role in the nuclear translocation, retention and transcriptional activity of STAT3. May play a role as an effector of ARL2. In Mus musculus (Mouse), this protein is ADP-ribosylation factor-like protein 2-binding protein (Arl2bp).